The chain runs to 199 residues: uncharacterized protein (199 aa).

The disordered stretch occupies residues 1-48 (MSANEFYSSGQQGQYNQQNNQERTGAPNNGQYGADNGNPNGERGLFST). Ser-2 is modified (N-acetylserine). The segment covering 7-21 (YSSGQQGQYNQQNNQ) has biased composition (low complexity). Residues 22-31 (ERTGAPNNGQ) show a composition bias toward polar residues. Ser-53 and Ser-70 each carry phosphoserine. The tract at residues 89-199 (RKEHKQQEQY…RQGFNGGSRW (111 aa)) is disordered. 3 stretches are compositionally biased toward gly residues: residues 124–163 (GGFG…GFGG), 170–179 (GGPGGQGFGG), and 186–199 (GGQG…GSRW).

Its subcellular location is the mitochondrion. This is an uncharacterized protein from Saccharomyces cerevisiae (strain ATCC 204508 / S288c) (Baker's yeast).